Here is a 155-residue protein sequence, read N- to C-terminus: Ribonuclease 2B (155 aa).

The N-terminal stretch at 1–25 (MGLKLLESRLCLLLLLGLVLTLVSC) is a signal peptide. His38 (proton acceptor) is an active-site residue. 4 disulfide bridges follow: Cys47–Cys106, Cys61–Cys118, Cys79–Cys133, and Cys86–Cys94. 62-66 (KDLNT) is a binding site for substrate. Asn114 carries N-linked (GlcNAc...) asparagine glycosylation. His150 acts as the Proton donor in catalysis.

This sequence belongs to the pancreatic ribonuclease family.

It catalyses the reaction an [RNA] containing cytidine + H2O = an [RNA]-3'-cytidine-3'-phosphate + a 5'-hydroxy-ribonucleotide-3'-[RNA].. It carries out the reaction an [RNA] containing uridine + H2O = an [RNA]-3'-uridine-3'-phosphate + a 5'-hydroxy-ribonucleotide-3'-[RNA].. Functionally, this is a non-secretory ribonuclease. It is a pyrimidine specific nuclease with a slight preference for U. Cytotoxin and helminthotoxin. Possesses a wide variety of biological activities. The sequence is that of Ribonuclease 2B from Mus musculus (Mouse).